The sequence spans 560 residues: Serine palmitoyltransferase 2 (560 aa).

A helical transmembrane segment spans residues 65–85 (PMLVAVLTYVGYGVLTLFGYL). The residue at position 377 (lysine 377) is an N6-(pyridoxal phosphate)lysine.

It belongs to the class-II pyridoxal-phosphate-dependent aminotransferase family. In terms of assembly, component of the serine palmitoyltransferase (SPT) complex, which is composed of SPTLC1, SPTLC2 or SPTLC3 and SPTSSA or SPTSSB. The heterodimer consisting of SPTLC1 and SPTLC2/SPTLC3 forms the catalytic core of the enzyme, while SPTSSA or SPTSSB subunits determine substrate specificity. SPT also interacts with ORMDL proteins, especially ORMDL3, which negatively regulate SPT activity in the presence of ceramides. Forms dimers of heterodimers with SPTLC1. The cofactor is pyridoxal 5'-phosphate.

The protein resides in the endoplasmic reticulum membrane. The catalysed reaction is L-serine + hexadecanoyl-CoA + H(+) = 3-oxosphinganine + CO2 + CoA. The enzyme catalyses octadecanoyl-CoA + L-serine + H(+) = 3-oxoeicosasphinganine + CO2 + CoA. The protein operates within lipid metabolism; sphingolipid metabolism. SPT complex catalytic activity is negatively regulated by ORMDL proteins, including ORMDL3, in the presence of ceramides. This mechanism allows to maintain ceramide levels at sufficient concentrations for the production of complex sphingolipids, but which prevents the accumulation of ceramides to levels that trigger apoptosis. Functionally, component of the serine palmitoyltransferase multisubunit enzyme (SPT) that catalyzes the initial and rate-limiting step in sphingolipid biosynthesis by condensing L-serine and activated acyl-CoA (most commonly palmitoyl-CoA) to form long-chain bases. The SPT complex is composed of SPTLC1, SPTLC2 or SPTLC3 and SPTSSA or SPTSSB. Within this complex, the heterodimer consisting of SPTLC1 and SPTLC2/SPTLC3 forms the catalytic core. The composition of the serine palmitoyltransferase (SPT) complex determines the substrate preference. The SPTLC1-SPTLC2-SPTSSA complex shows a strong preference for C16-CoA substrate, while the SPTLC1-SPTLC3-SPTSSA isozyme uses both C14-CoA and C16-CoA as substrates, with a slight preference for C14-CoA. The SPTLC1-SPTLC2-SPTSSB complex shows a strong preference for C18-CoA substrate, while the SPTLC1-SPTLC3-SPTSSB isozyme displays an ability to use a broader range of acyl-CoAs, without apparent preference. Crucial for adipogenesis. In Cricetulus griseus (Chinese hamster), this protein is Serine palmitoyltransferase 2 (SPTLC2).